A 475-amino-acid polypeptide reads, in one-letter code: tRNA-2-methylthio-N(6)-dimethylallyladenosine synthase (475 aa).

Residues 1–10 show a composition bias toward basic and acidic residues; it reads MQETTVKRDG. Residues 1-22 are disordered; that stretch reads MQETTVKRDGASPSDAGTPATT. The MTTase N-terminal domain occupies 27–144; it reads GKLYIRTFGC…LPDLIKRRRA (118 aa). [4Fe-4S] cluster is bound by residues Cys36, Cys73, Cys107, Cys181, Cys185, and Cys188. The Radical SAM core domain occupies 167–400; that stretch reads RVDGATAFVS…QALINQQAAA (234 aa). Residues 403 to 466 enclose the TRAM domain; sequence QGMIGTRQRV…TNSLRGRVAG (64 aa).

This sequence belongs to the methylthiotransferase family. MiaB subfamily. As to quaternary structure, monomer. [4Fe-4S] cluster serves as cofactor.

It is found in the cytoplasm. It catalyses the reaction N(6)-dimethylallyladenosine(37) in tRNA + (sulfur carrier)-SH + AH2 + 2 S-adenosyl-L-methionine = 2-methylsulfanyl-N(6)-dimethylallyladenosine(37) in tRNA + (sulfur carrier)-H + 5'-deoxyadenosine + L-methionine + A + S-adenosyl-L-homocysteine + 2 H(+). Catalyzes the methylthiolation of N6-(dimethylallyl)adenosine (i(6)A), leading to the formation of 2-methylthio-N6-(dimethylallyl)adenosine (ms(2)i(6)A) at position 37 in tRNAs that read codons beginning with uridine. This chain is tRNA-2-methylthio-N(6)-dimethylallyladenosine synthase, found in Bordetella parapertussis (strain 12822 / ATCC BAA-587 / NCTC 13253).